Reading from the N-terminus, the 24-residue chain is Heat shock 70 kDa protein 4L (24 aa).

Position 19 is a phosphothreonine (Thr19).

It belongs to the heat shock protein 70 family. In terms of assembly, homodimer. In the testis, forms a complex with p53 at 32.5 degrees Celsius which is scrotal temperature but not at 37 or 42 degrees Celsius. In terms of tissue distribution, expressed at high levels in testis and at much lower levels in brain. In testis, expressed mainly in germ cells. Widespread in brain with highest expression in cerebellum and medulla oblongata. Also expressed in renal medulla of water-restricted animals.

Its subcellular location is the cytoplasm. It localises to the nucleus. Its function is as follows. Possesses chaperone activity in vitro where it inhibits aggregation of citrate synthase. This chain is Heat shock 70 kDa protein 4L (Hspa4l), found in Rattus norvegicus (Rat).